A 473-amino-acid polypeptide reads, in one-letter code: H(+)/Cl(-) exchange transporter ClcA (473 aa).

Residues methionine 1 to proline 32 are Cytoplasmic-facing. A helical membrane pass occupies residues leucine 33–valine 69. At histidine 70–proline 76 the chain is on the periplasmic side. The chain crosses the membrane as a helical span at residues leucine 77–tyrosine 100. The short motif at glycine 106–proline 110 is the Selectivity filter part_1 element. Residue serine 107 participates in chloride binding. Residues isoleucine 109–leucine 116 constitute an intramembrane region (helical). Over glutamate 117–arginine 123 the chain is Cytoplasmic. 2 helical membrane-spanning segments follow: residues tryptophan 124–glycine 141 and glutamate 148–phenylalanine 166. Positions glycine 146–proline 150 match the Selectivity filter part_2 motif. The Cytoplasmic portion of the chain corresponds to arginine 167–threonine 176. 2 consecutive intramembrane regions (helical) follow at residues leucine 177–alanine 189 and proline 193–isoleucine 201. Over glutamate 202–serine 214 the chain is Cytoplasmic. The helical transmembrane segment at isoleucine 215 to phenylalanine 232 threads the bilayer. At asparagine 233–glutamine 252 the chain is on the periplasmic side. The chain crosses the membrane as a helical span at residues tryptophan 253 to histidine 281. Topologically, residues arginine 282–asparagine 287 are cytoplasmic. Residues isoleucine 288–alanine 309 form a helical membrane-spanning segment. Residues proline 310–serine 329 lie on the Periplasmic side of the membrane. Helical transmembrane passes span methionine 330 to serine 349 and glycine 355 to valine 376. The Selectivity filter part_3 motif lies at glycine 355–proline 359. Chloride-binding residues include isoleucine 356 and phenylalanine 357. The Periplasmic portion of the chain corresponds to glutamate 377–alanine 386. Positions glycine 387–serine 401 form an intramembrane region, helical. The note=Loop between two helices intramembrane region spans isoleucine 402–alanine 404. Positions proline 405–threonine 416 form an intramembrane region, helical. An intramembrane region (note=Loop between two helices) is located at residues aspartate 417–leucine 421. Residues isoleucine 422 to phenylalanine 438 form a helical membrane-spanning segment. Residues threonine 439 to threonine 473 lie on the Cytoplasmic side of the membrane. Tyrosine 445 serves as a coordination point for chloride.

It belongs to the chloride channel (TC 2.A.49) family. ClcA subfamily. Homodimer.

The protein resides in the cell inner membrane. The enzyme catalyses 2 chloride(in) + H(+)(out) = 2 chloride(out) + H(+)(in). Its function is as follows. Proton-coupled chloride transporter. Functions as antiport system and exchanges two chloride ions for 1 proton. Probably acts as an electrical shunt for an outwardly-directed proton pump that is linked to amino acid decarboxylation, as part of the extreme acid resistance (XAR) response. The sequence is that of H(+)/Cl(-) exchange transporter ClcA from Shigella boydii serotype 18 (strain CDC 3083-94 / BS512).